The sequence spans 366 residues: Ribosomal RNA large subunit methyltransferase M (366 aa).

S-adenosyl-L-methionine-binding positions include Ser-188, 221 to 224 (CPGG), Asp-240, Asp-260, and Asp-277. Residue Lys-306 is the Proton acceptor of the active site.

It belongs to the class I-like SAM-binding methyltransferase superfamily. RNA methyltransferase RlmE family. RlmM subfamily. Monomer.

The protein resides in the cytoplasm. It catalyses the reaction cytidine(2498) in 23S rRNA + S-adenosyl-L-methionine = 2'-O-methylcytidine(2498) in 23S rRNA + S-adenosyl-L-homocysteine + H(+). Catalyzes the 2'-O-methylation at nucleotide C2498 in 23S rRNA. This is Ribosomal RNA large subunit methyltransferase M from Pectobacterium carotovorum subsp. carotovorum (strain PC1).